The primary structure comprises 353 residues: uncharacterized protein (353 aa).

Positions 1-30 (MHLRHLFSPRLRGSLLLGSLLVASSFSTLA) are cleaved as a signal peptide.

This is an uncharacterized protein from Salmonella typhimurium (strain LT2 / SGSC1412 / ATCC 700720).